Consider the following 345-residue polypeptide: uncharacterized protein (345 aa).

Disordered regions lie at residues 1 to 24 (MGLE…ENRK) and 296 to 345 (MTAH…LNES). Positions 304 to 323 (SDYDNDDDTDGIINETDYEL) are enriched in acidic residues. A compositionally biased stretch (polar residues) spans 324 to 345 (DTSQSEFATLTTSSNKSILNES).

This is an uncharacterized protein from Schizosaccharomyces pombe (strain 972 / ATCC 24843) (Fission yeast).